The chain runs to 181 residues: Photosystem I assembly protein Ycf4 (181 aa).

The next 2 helical transmembrane spans lie at Tyr-19–Phe-41 and Leu-61–Trp-83.

The protein belongs to the Ycf4 family.

It is found in the plastid. Its subcellular location is the chloroplast thylakoid membrane. Functionally, seems to be required for the assembly of the photosystem I complex. The polypeptide is Photosystem I assembly protein Ycf4 (Trieres chinensis (Marine centric diatom)).